A 332-amino-acid chain; its full sequence is Tetraacyldisaccharide 4'-kinase (332 aa).

58-65 (TVGGSGKT) is a binding site for ATP.

Belongs to the LpxK family.

The enzyme catalyses a lipid A disaccharide + ATP = a lipid IVA + ADP + H(+). It functions in the pathway glycolipid biosynthesis; lipid IV(A) biosynthesis; lipid IV(A) from (3R)-3-hydroxytetradecanoyl-[acyl-carrier-protein] and UDP-N-acetyl-alpha-D-glucosamine: step 6/6. In terms of biological role, transfers the gamma-phosphate of ATP to the 4'-position of a tetraacyldisaccharide 1-phosphate intermediate (termed DS-1-P) to form tetraacyldisaccharide 1,4'-bis-phosphate (lipid IVA). This Shewanella piezotolerans (strain WP3 / JCM 13877) protein is Tetraacyldisaccharide 4'-kinase.